The following is a 557-amino-acid chain: High-affinity hexose transporter ght4 (557 aa).

Residues Met1–Leu9 are Cytoplasmic-facing. The chain crosses the membrane as a helical span at residues Val10–Ile30. Over Leu31 to Gln58 the chain is Extracellular. Residues Ala59–Phe79 form a helical membrane-spanning segment. At Thr80–Tyr87 the chain is on the cytoplasmic side. The chain crosses the membrane as a helical span at residues Ser88 to Pro108. Residues Ser109–Gln112 are Extracellular-facing. A helical transmembrane segment spans residues Ile113–Gly133. Topologically, residues Tyr134 to Arg144 are cytoplasmic. A helical transmembrane segment spans residues Gly145–Ile165. At Asn166 to Arg179 the chain is on the extracellular side. Residues Thr180–Pro200 traverse the membrane as a helical segment. Residues Glu201 to Thr266 are Cytoplasmic-facing. A helical membrane pass occupies residues Val267–Phe285. Residues Tyr286–Phe301 are Extracellular-facing. The chain crosses the membrane as a helical span at residues Leu302–Ile322. Over Asp323–Arg328 the chain is Cytoplasmic. A helical transmembrane segment spans residues Asn329–Gly349. At Asp350–Arg363 the chain is on the extracellular side. A glycan (N-linked (GlcNAc...) asparagine) is linked at Asn357. Residues Ala364–Gly384 form a helical membrane-spanning segment. Topologically, residues Pro385–Ala404 are cytoplasmic. Residues Ala405–Ile425 form a helical membrane-spanning segment. The Extracellular portion of the chain corresponds to Ser426 to Lys432. The helical transmembrane segment at Leu433–Lys453 threads the bilayer. The Cytoplasmic segment spans residues Glu454–Val557. Residues Lys492–Glu514 are compositionally biased toward basic and acidic residues. Residues Lys492–Val557 are disordered. The span at Ser524–Ala536 shows a compositional bias: low complexity. The span at Asn547 to Val557 shows a compositional bias: basic and acidic residues.

This sequence belongs to the major facilitator superfamily. Sugar transporter (TC 2.A.1.1) family.

The protein resides in the membrane. This is High-affinity hexose transporter ght4 (ght4) from Schizosaccharomyces pombe (strain 972 / ATCC 24843) (Fission yeast).